The chain runs to 100 residues: Urease subunit gamma (100 aa).

It belongs to the urease gamma subunit family. In terms of assembly, heterotrimer of UreA (gamma), UreB (beta) and UreC (alpha) subunits. Three heterotrimers associate to form the active enzyme.

Its subcellular location is the cytoplasm. It carries out the reaction urea + 2 H2O + H(+) = hydrogencarbonate + 2 NH4(+). It participates in nitrogen metabolism; urea degradation; CO(2) and NH(3) from urea (urease route): step 1/1. The protein is Urease subunit gamma of Paraburkholderia phymatum (strain DSM 17167 / CIP 108236 / LMG 21445 / STM815) (Burkholderia phymatum).